The primary structure comprises 743 residues: Probable TonB-dependent receptor BfrD (743 aa).

The first 30 residues, 1–30, serve as a signal peptide directing secretion; sequence MKFYSSHPMPESLAAAIAVPLLGLLPAAQA. Residues 62 to 168 form the TBDR plug domain; sequence PLADTPRTVQ…AGGSINLVTK (107 aa). The region spanning 173 to 743 is the TBDR beta-barrel domain; that stretch reads QDFTEVQAGI…SAMLTFKLSY (571 aa). The TonB C-terminal box motif lies at 726 to 743; it reads YAALGPGRSAMLTFKLSY.

It belongs to the TonB-dependent receptor family.

The protein localises to the cell outer membrane. In terms of biological role, probably involved in iron transport. This Bordetella pertussis (strain Tohama I / ATCC BAA-589 / NCTC 13251) protein is Probable TonB-dependent receptor BfrD (bfrD).